Here is a 269-residue protein sequence, read N- to C-terminus: Cell wall protein TIR3 (269 aa).

Residues 1-22 form the signal peptide; the sequence is MSFTKIAALLAVAAASTQLVSA. The tract at residues 128-242 is disordered; the sequence is SGSESATASS…TNSSSSATSK (115 aa). Asn-234 is a glycosylation site (N-linked (GlcNAc...) asparagine). Gly-245 carries GPI-anchor amidated glycine lipidation. Positions 246-269 are cleaved as a propeptide — removed in mature form; sequence AAMDMGFFSAGVGAAIAGAAAMLL.

The protein belongs to the SRP1/TIP1 family. Post-translationally, extensively O-glycosylated. The GPI-anchor is attached to the protein in the endoplasmic reticulum and serves to target the protein to the cell surface. There, the glucosamine-inositol phospholipid moiety is cleaved off and the GPI-modified mannoprotein is covalently attached via its lipidless GPI glycan remnant to the 1,6-beta-glucan of the outer cell wall layer.

Its subcellular location is the secreted. It localises to the cell wall. The protein resides in the membrane. Component of the cell wall. Required for anaerobic growth. The chain is Cell wall protein TIR3 (TIR3) from Saccharomyces cerevisiae (strain ATCC 204508 / S288c) (Baker's yeast).